Here is a 334-residue protein sequence, read N- to C-terminus: DNA-directed RNA polymerase subunit alpha (334 aa).

The tract at residues 1 to 232 is alpha N-terminal domain (alpha-NTD); the sequence is MVREEIAVST…IDLFIPFLHA (232 aa). The alpha C-terminal domain (alpha-CTD) stretch occupies residues 268–334; it reads GIALKCIFID…ILQKHFTIDC (67 aa).

It belongs to the RNA polymerase alpha chain family. In plastids the minimal PEP RNA polymerase catalytic core is composed of four subunits: alpha, beta, beta', and beta''. When a (nuclear-encoded) sigma factor is associated with the core the holoenzyme is formed, which can initiate transcription.

Its subcellular location is the plastid. The protein localises to the chloroplast. The enzyme catalyses RNA(n) + a ribonucleoside 5'-triphosphate = RNA(n+1) + diphosphate. In terms of biological role, DNA-dependent RNA polymerase catalyzes the transcription of DNA into RNA using the four ribonucleoside triphosphates as substrates. The sequence is that of DNA-directed RNA polymerase subunit alpha from Chloranthus spicatus (Chulantree).